The following is a 488-amino-acid chain: Ribulose bisphosphate carboxylase large chain (488 aa).

2 residues coordinate substrate: Asn-127 and Thr-177. The Proton acceptor role is filled by Lys-179. Position 181 (Lys-181) interacts with substrate. Residues Lys-205, Asp-207, and Glu-208 each contribute to the Mg(2+) site. At Lys-205 the chain carries N6-carboxylysine. The active-site Proton acceptor is His-297. 3 residues coordinate substrate: Arg-298, His-330, and Ser-382.

This sequence belongs to the RuBisCO large chain family. Type I subfamily. Heterohexadecamer of 8 large chains and 8 small chains. The cofactor is Mg(2+).

The protein resides in the plastid. It localises to the chloroplast. The catalysed reaction is 2 (2R)-3-phosphoglycerate + 2 H(+) = D-ribulose 1,5-bisphosphate + CO2 + H2O. It carries out the reaction D-ribulose 1,5-bisphosphate + O2 = 2-phosphoglycolate + (2R)-3-phosphoglycerate + 2 H(+). Its function is as follows. RuBisCO catalyzes two reactions: the carboxylation of D-ribulose 1,5-bisphosphate, the primary event in carbon dioxide fixation, as well as the oxidative fragmentation of the pentose substrate in the photorespiration process. Both reactions occur simultaneously and in competition at the same active site. In Pyropia dentata (Red alga), this protein is Ribulose bisphosphate carboxylase large chain (rbcL).